The chain runs to 147 residues: Insertion element IS402 uncharacterized 16.2 kDa protein (147 aa).

A disordered region spans residues 106–147; it reads DSSSIRAVGAGQKLGQTPPIARDPVPSTTSSPTPTVRRSPRS. The span at 129–147 shows a compositional bias: low complexity; the sequence is PVPSTTSSPTPTVRRSPRS.

It belongs to the transposase 6 family.

The protein is Insertion element IS402 uncharacterized 16.2 kDa protein of Burkholderia cepacia (Pseudomonas cepacia).